The primary structure comprises 426 residues: Glutamate-1-semialdehyde 2,1-aminomutase (426 aa).

Lysine 265 carries the N6-(pyridoxal phosphate)lysine modification.

This sequence belongs to the class-III pyridoxal-phosphate-dependent aminotransferase family. HemL subfamily. Homodimer. Pyridoxal 5'-phosphate serves as cofactor.

Its subcellular location is the cytoplasm. It catalyses the reaction (S)-4-amino-5-oxopentanoate = 5-aminolevulinate. Its pathway is porphyrin-containing compound metabolism; protoporphyrin-IX biosynthesis; 5-aminolevulinate from L-glutamyl-tRNA(Glu): step 2/2. In Escherichia coli O139:H28 (strain E24377A / ETEC), this protein is Glutamate-1-semialdehyde 2,1-aminomutase.